Here is a 206-residue protein sequence, read N- to C-terminus: Urease accessory protein UreE (206 aa).

Residues 136-206 (PEGGAYAEPS…HGHAHAHDRK (71 aa)) are disordered. Composition is skewed to basic and acidic residues over residues 148–169 (QGHD…GGHE) and 177–191 (HGHA…EHCG). The span at 192-206 (HGHHHHGHAHAHDRK) shows a compositional bias: basic residues.

The protein belongs to the UreE family.

Its subcellular location is the cytoplasm. In terms of biological role, involved in urease metallocenter assembly. Binds nickel. Probably functions as a nickel donor during metallocenter assembly. The polypeptide is Urease accessory protein UreE (Bradyrhizobium sp. (strain BTAi1 / ATCC BAA-1182)).